The primary structure comprises 242 residues: 1-(5-phosphoribosyl)-5-[(5-phosphoribosylamino)methylideneamino] imidazole-4-carboxamide isomerase (242 aa).

The active-site Proton acceptor is the Asp8. Asp129 (proton donor) is an active-site residue.

Belongs to the HisA/HisF family.

It localises to the cytoplasm. It carries out the reaction 1-(5-phospho-beta-D-ribosyl)-5-[(5-phospho-beta-D-ribosylamino)methylideneamino]imidazole-4-carboxamide = 5-[(5-phospho-1-deoxy-D-ribulos-1-ylimino)methylamino]-1-(5-phospho-beta-D-ribosyl)imidazole-4-carboxamide. It functions in the pathway amino-acid biosynthesis; L-histidine biosynthesis; L-histidine from 5-phospho-alpha-D-ribose 1-diphosphate: step 4/9. This chain is 1-(5-phosphoribosyl)-5-[(5-phosphoribosylamino)methylideneamino] imidazole-4-carboxamide isomerase, found in Beijerinckia indica subsp. indica (strain ATCC 9039 / DSM 1715 / NCIMB 8712).